Here is a 200-residue protein sequence, read N- to C-terminus: Mpv17-like protein 2 (200 aa).

A run of 3 helical transmembrane segments spans residues 24–40 (ALLL…MAAG), 63–83 (ASMF…YLWL), and 102–122 (VLVD…LGLG).

The protein belongs to the peroxisomal membrane protein PXMP2/4 family. As to quaternary structure, interacts with the large mitochondrial ribosomal subunit.

It localises to the membrane. The protein resides in the mitochondrion inner membrane. Required for the assembly and stability of the mitochondrial ribosome. Is a positive regulator of mitochondrial protein synthesis. The protein is Mpv17-like protein 2 (Mpv17l2) of Mus musculus (Mouse).